The primary structure comprises 156 residues: Snaclec A10 (156 aa).

The signal sequence occupies residues 1–23 (MGRSISVSFGLLVVFLSLSGIGA). 3 cysteine pairs are disulfide-bonded: cysteine 27/cysteine 38, cysteine 55/cysteine 154, and cysteine 129/cysteine 146. Residues 34 to 155 (YDQHCYQAVD…CGQPYRFTCE (122 aa)) form the C-type lectin domain.

This sequence belongs to the snaclec family. Heterodimer; disulfide-linked. As to expression, expressed by the venom gland.

It is found in the secreted. Functionally, interferes with one step of hemostasis (modulation of platelet aggregation, or coagulation cascade, for example). The chain is Snaclec A10 from Macrovipera lebetinus (Levantine viper).